A 329-amino-acid chain; its full sequence is Beta-ketoacyl-[acyl-carrier-protein] synthase III (329 aa).

Residues Cys-113 and His-255 contribute to the active site. The segment at 256–260 is ACP-binding; it reads QANQR. Residue Asn-285 is part of the active site.

The protein belongs to the thiolase-like superfamily. FabH family. Homodimer.

It localises to the cytoplasm. The catalysed reaction is malonyl-[ACP] + acetyl-CoA + H(+) = 3-oxobutanoyl-[ACP] + CO2 + CoA. The protein operates within lipid metabolism; fatty acid biosynthesis. Functionally, catalyzes the condensation reaction of fatty acid synthesis by the addition to an acyl acceptor of two carbons from malonyl-ACP. Catalyzes the first condensation reaction which initiates fatty acid synthesis and may therefore play a role in governing the total rate of fatty acid production. Possesses both acetoacetyl-ACP synthase and acetyl transacylase activities. Its substrate specificity determines the biosynthesis of branched-chain and/or straight-chain of fatty acids. This chain is Beta-ketoacyl-[acyl-carrier-protein] synthase III, found in Chlorobaculum tepidum (strain ATCC 49652 / DSM 12025 / NBRC 103806 / TLS) (Chlorobium tepidum).